Reading from the N-terminus, the 534-residue chain is Thromboxane-A synthase (534 aa).

The Cytoplasmic segment spans residues 1 to 10 (MEVLGFLSPE). Residues 11 to 31 (LNGPMVTMALAVVLLALLKWY) form a helical membrane-spanning segment. Residues 32-75 (STSAFSRLEKLGIRHPKPSPFIGNLTFFRQGFWESHMELRKQYG) are Lumenal-facing. The helical transmembrane segment at 76–96 (PLSGYYLGRRMIVVISDPDMI) threads the bilayer. The Cytoplasmic segment spans residues 97–223 (KQVLAEKFSN…RRFFAFSVPR (127 aa)). A helical transmembrane segment spans residues 224–244 (LILVLILSFPSIMVPLARILP). The Lumenal portion of the chain corresponds to 245-336 (NKKRDEVNGF…LTVDEVVGQA (92 aa)). The chain crosses the membrane as a helical span at residues 337–357 (FLFLIAGYEIITNTLSFVTYL). At 358-534 (LATNPDCQEK…NGVYIRIVPR (177 aa)) the chain is on the cytoplasmic side. Cys480 contributes to the heme binding site.

This sequence belongs to the cytochrome P450 family. Monomer. Heme is required as a cofactor. In terms of tissue distribution, expressed in lung, kidney and thymus.

It localises to the endoplasmic reticulum membrane. The enzyme catalyses prostaglandin H2 = thromboxane A2. It catalyses the reaction prostaglandin H2 = (12S)-hydroxy-(5Z,8E,10E)-heptadecatrienoate + malonaldehyde. The catalysed reaction is a hydroperoxyeicosatetraenoate = an oxoeicosatetraenoate + H2O. It carries out the reaction (15S)-hydroperoxy-(5Z,8Z,11Z,13E)-eicosatetraenoate = 15-oxo-(5Z,8Z,11Z,13E)-eicosatetraenoate + H2O. The enzyme catalyses (15S)-hydroperoxy-(5Z,8Z,11Z,13E)-eicosatetraenoate + AH2 = (15S)-hydroxy-(5Z,8Z,11Z,13E)-eicosatetraenoate + A + H2O. Catalyzes the conversion of prostaglandin H2 (PGH2) to thromboxane A2 (TXA2), a potent inducer of blood vessel constriction and platelet aggregation. Also cleaves PGH2 to 12-hydroxy-heptadecatrienoicacid (12-HHT) and malondialdehyde, which is known to act as a mediator of DNA damage. 12-HHT and malondialdehyde are formed stoichiometrically in the same amounts as TXA2. Additionally, displays dehydratase activity, toward (15S)-hydroperoxy-(5Z,8Z,11Z,13E)-eicosatetraenoate (15(S)-HPETE) producing 15-KETE and 15-HETE. The chain is Thromboxane-A synthase (TBXAS1) from Sus scrofa (Pig).